The sequence spans 624 residues: FAD-dependent monooxygenase apdD (624 aa).

Residues Glu73 and Asp359 each contribute to the FAD site.

It belongs to the paxM FAD-dependent monooxygenase family. FAD serves as cofactor.

It functions in the pathway secondary metabolite biosynthesis. FAD-dependent monooxygenase; part of the gene cluster that mediates the biosynthesis of aspyridones. The polyketide-amino acid backbone preaspyridone A is first assembled by the PKS-NRPS hybrid apdA. The assembly of preaspyridone A is initiated by loading of malonyl-CoA onto apdA, followed by decarboxylation to yield the acetyl starter unit. The growing polyketide chain then elongates into a tetraketide. The adpA PKS module catalyzes three Claisen condensations, as well as beta-keto processing and methylation. Alpha-methylation step during polyketide synthesis is a prerequisite and a key checkpoint for chain transfer between PKS and NRPS modules. The downstream NRPS module contains the condensation (C), adenylation (A), and thiolation (T) domains and catalyzes the incorporation of tyrosine via the formation of the L-tyrosinyl-thioester and the amide linkage between L-tyrosinyl-thioester and the tetraketide. The bimodular assembly line is terminated with a reductase (R) domain that facilitates formation and release of the tetramic acid product. Because apdA lacks a designated enoylreductase (ER) domain, the required activity is provided the enoyl reductase apdC. ApdC appears to operate with different stereoselectivity in different PKS cycle. Combined with apdC, apdA is proposed to synthesize preaspyridone A via about 20 enzymatic steps. A number of oxidative steps performed successively by the cytochrome P450 monooxygenases apdE and apdB are required for the conversion of preaspyridone A to aspyridone A. The cytochrome P450 monooxygenase apdE is responsible for the oxidative dephenylation of preaspyridone A. Finally, the predicted FAD-dependent monooxygenase apdD and the acyl-CoA dehydrogenase apdG may be involved in the transformation of aspyridone A into aspyridone B. The sequence is that of FAD-dependent monooxygenase apdD from Emericella nidulans (strain FGSC A4 / ATCC 38163 / CBS 112.46 / NRRL 194 / M139) (Aspergillus nidulans).